The following is a 627-amino-acid chain: Glutamine--fructose-6-phosphate aminotransferase [isomerizing] (627 aa).

Catalysis depends on Cys2, which acts as the Nucleophile; for GATase activity. One can recognise a Glutamine amidotransferase type-2 domain in the interval 2–224; that stretch reads CGIVGYIGTQ…NGEIARLTPL (223 aa). SIS domains lie at 293-442 and 476-617; these read LPEN…HRQT and LAHE…VDQP. Lys622 (for Fru-6P isomerization activity) is an active-site residue.

Homodimer.

The protein resides in the cytoplasm. It carries out the reaction D-fructose 6-phosphate + L-glutamine = D-glucosamine 6-phosphate + L-glutamate. In terms of biological role, catalyzes the first step in hexosamine metabolism, converting fructose-6P into glucosamine-6P using glutamine as a nitrogen source. In Nostoc sp. (strain PCC 9229), this protein is Glutamine--fructose-6-phosphate aminotransferase [isomerizing].